The following is a 325-amino-acid chain: Golgi to ER traffic protein 4 homolog B (325 aa).

Disordered stretches follow at residues 1–22 (MAAA…GGVQ) and 306–325 (SGED…IELD). The span at 307–317 (GEDDDVEDGQE) shows a compositional bias: acidic residues.

Belongs to the GET4 family. In terms of assembly, component of the bag6/bat3 complex.

The protein localises to the cytoplasm. The protein resides in the cytosol. As part of a cytosolic protein quality control complex, the bag6/bat3 complex, maintains misfolded and hydrophobic patches-containing proteins in a soluble state and participates in their proper delivery to the endoplasmic reticulum or alternatively can promote their sorting to the proteasome where they undergo degradation. The bag6/bat3 complex is involved in the post-translational delivery of tail-anchored/type II transmembrane proteins to the endoplasmic reticulum membrane. Similarly, the bag6/bat3 complex also functions as a sorting platform for proteins of the secretory pathway that are mislocalized to the cytosol either delivering them to the proteasome for degradation or to the endoplasmic reticulum. The bag6/bat3 complex also plays a role in the endoplasmic reticulum-associated degradation (ERAD), a quality control mechanism that eliminates unwanted proteins of the endoplasmic reticulum through their retrotranslocation to the cytosol and their targeting to the proteasome. It maintains these retrotranslocated proteins in an unfolded yet soluble state condition in the cytosol to ensure their proper delivery to the proteasome. The polypeptide is Golgi to ER traffic protein 4 homolog B (get4-b) (Xenopus laevis (African clawed frog)).